The following is a 121-amino-acid chain: Large ribosomal subunit protein bL12 (121 aa).

Belongs to the bacterial ribosomal protein bL12 family. Homodimer. Part of the ribosomal stalk of the 50S ribosomal subunit. Forms a multimeric L10(L12)X complex, where L10 forms an elongated spine to which 2 to 4 L12 dimers bind in a sequential fashion. Binds GTP-bound translation factors.

Forms part of the ribosomal stalk which helps the ribosome interact with GTP-bound translation factors. Is thus essential for accurate translation. The protein is Large ribosomal subunit protein bL12 of Pediococcus pentosaceus (strain ATCC 25745 / CCUG 21536 / LMG 10740 / 183-1w).